The sequence spans 94 residues: Citrate lyase acyl carrier protein (94 aa).

The residue at position 14 (Ser14) is an O-(phosphoribosyl dephospho-coenzyme A)serine.

It belongs to the CitD family. Oligomer with a subunit composition of (alpha,beta,gamma)6.

Its subcellular location is the cytoplasm. Covalent carrier of the coenzyme of citrate lyase. In Halothermothrix orenii (strain H 168 / OCM 544 / DSM 9562), this protein is Citrate lyase acyl carrier protein.